The following is a 932-amino-acid chain: RNA-binding protein 12 (932 aa).

The tract at residues 97 to 116 (IPPANASRSGPPPSSGMSGR) is disordered. Low complexity predominate over residues 98–116 (PPANASRSGPPPSSGMSGR). Residues 304 to 379 (LYVSVHGMPF…RYVEVSPATE (76 aa)) enclose the RRM 1 domain. A phosphoserine mark is found at S352 and S375. 2 stretches are compositionally biased toward polar residues: residues 392–401 (KQNMGPSGQT) and 408–417 (LPRSKSPSGQ). The disordered stretch occupies residues 392 to 424 (KQNMGPSGQTHPPPQTLPRSKSPSGQKRSRSRS). 3 positions are modified to phosphoserine: S420, S422, and S424. Positions 430 to 507 (FCVYLKGLPF…RFIQVHPITK (78 aa)) constitute an RRM 2 domain. Phosphoserine is present on S525. A compositionally biased stretch (low complexity) spans 717–734 (NGPPFNFPGNFGGSNAFG). A disordered region spans residues 717 to 855 (NGPPFNFPGN…PGFASSSGKP (139 aa)). Gly residues predominate over residues 783–811 (SGFGGGPQNFGNGPGSLGGPPGFGSGPPG). Positions 824–838 (AFGPGPGPGPGPGPG) are enriched in pro residues. Residues 856-932 (GPTVIKVQNM…PIGSRKVNLY (77 aa)) form the RRM 3 domain.

It localises to the nucleus. This chain is RNA-binding protein 12 (RBM12), found in Pongo abelii (Sumatran orangutan).